The sequence spans 420 residues: LanC-like protein 3 (420 aa).

Belongs to the LanC-like protein family.

The sequence is that of LanC-like protein 3 (LANCL3) from Homo sapiens (Human).